The chain runs to 447 residues: Alliin lyase (447 aa).

Residues 1–2 constitute a propeptide that is removed on maturation; the sequence is QA. Positions 15–61 constitute an EGF-like; atypical domain; it reads EAVANINCSGHGRAFLDGILSDGSPKCECNTCYTGADCSQKITGCSA. The N-linked (GlcNAc...) asparagine glycan is linked to Asn21. Intrachain disulfides connect Cys22–Cys41, Cys43–Cys52, and Cys46–Cys59. Chloride is bound at residue 94–102; the sequence is YFFNPVSNF. N-linked (GlcNAc...) asparagine glycans are attached at residues Asn148 and Asn193. Position 253 is an N6-(pyridoxal phosphate)lysine (Lys253). A glycan (N-linked (GlcNAc...) asparagine) is linked at Asn330. Cys370 and Cys378 form a disulfide bridge.

It belongs to the alliinase family. Homodimer. The cofactor is pyridoxal 5'-phosphate.

The protein localises to the vacuole. The catalysed reaction is an S-alkyl-L-cysteine S-oxide = an S-alkyl sulfenate + 2-aminoprop-2-enoate. This chain is Alliin lyase, found in Allium cepa var. aggregatum (Shallot).